Reading from the N-terminus, the 273-residue chain is 4-hydroxy-tetrahydrodipicolinate reductase (273 aa).

NAD(+)-binding positions include 12-17 (GAGGRM) and Glu-38. Arg-39 contacts NADP(+). NAD(+)-binding positions include 102–104 (GTT) and 126–129 (AANF). His-159 acts as the Proton donor/acceptor in catalysis. Position 160 (His-160) interacts with (S)-2,3,4,5-tetrahydrodipicolinate. Lys-163 serves as the catalytic Proton donor. 169–170 (GT) provides a ligand contact to (S)-2,3,4,5-tetrahydrodipicolinate.

Belongs to the DapB family. In terms of assembly, homotetramer.

It localises to the cytoplasm. The catalysed reaction is (S)-2,3,4,5-tetrahydrodipicolinate + NAD(+) + H2O = (2S,4S)-4-hydroxy-2,3,4,5-tetrahydrodipicolinate + NADH + H(+). The enzyme catalyses (S)-2,3,4,5-tetrahydrodipicolinate + NADP(+) + H2O = (2S,4S)-4-hydroxy-2,3,4,5-tetrahydrodipicolinate + NADPH + H(+). It participates in amino-acid biosynthesis; L-lysine biosynthesis via DAP pathway; (S)-tetrahydrodipicolinate from L-aspartate: step 4/4. Functionally, catalyzes the conversion of 4-hydroxy-tetrahydrodipicolinate (HTPA) to tetrahydrodipicolinate. This is 4-hydroxy-tetrahydrodipicolinate reductase from Salmonella typhimurium (strain LT2 / SGSC1412 / ATCC 700720).